Consider the following 92-residue polypeptide: RNA-binding protein Hfq (92 aa).

Residues 10 to 71 (DLFLNQLRKE…ISSIMPSKPI (62 aa)) form the Sm domain. The interval 73-92 (YMAQAQNNQQASQQSNNNQG) is disordered. Over residues 75-92 (AQAQNNQQASQQSNNNQG) the composition is skewed to low complexity.

Belongs to the Hfq family. In terms of assembly, homohexamer.

Functionally, RNA chaperone that binds small regulatory RNA (sRNAs) and mRNAs to facilitate mRNA translational regulation in response to envelope stress, environmental stress and changes in metabolite concentrations. Also binds with high specificity to tRNAs. The chain is RNA-binding protein Hfq from Caldicellulosiruptor bescii (strain ATCC BAA-1888 / DSM 6725 / KCTC 15123 / Z-1320) (Anaerocellum thermophilum).